The following is a 110-amino-acid chain: MIETIASKLLVQNVSQYFILSFILLGIGLFGMMVRKNLITILMSLELALNSVNIAFVGIDRLNHLIDGEIFALFTIALAAAEAAVGLGIILSLFRLRKAENVNEIIDLKG.

The next 3 membrane-spanning stretches (helical) occupy residues 14–34 (VSQY…GMMV), 39–59 (ITIL…FVGI), and 70–90 (IFAL…LGII).

Belongs to the complex I subunit 4L family. NDH-1 is composed of 14 different subunits. Subunits NuoA, H, J, K, L, M, N constitute the membrane sector of the complex.

It localises to the cell inner membrane. The enzyme catalyses a quinone + NADH + 5 H(+)(in) = a quinol + NAD(+) + 4 H(+)(out). NDH-1 shuttles electrons from NADH, via FMN and iron-sulfur (Fe-S) centers, to quinones in the respiratory chain. The immediate electron acceptor for the enzyme in this species is believed to be ubiquinone. Couples the redox reaction to proton translocation (for every two electrons transferred, four hydrogen ions are translocated across the cytoplasmic membrane), and thus conserves the redox energy in a proton gradient. This Hydrogenobaculum sp. (strain Y04AAS1) protein is NADH-quinone oxidoreductase subunit K.